Here is a 174-residue protein sequence, read N- to C-terminus: Probable adenylyl-sulfate kinase (174 aa).

Position 10-17 (10-17 (GPSGAGKT)) interacts with ATP. S84 serves as the catalytic Phosphoserine intermediate.

This sequence belongs to the APS kinase family.

The enzyme catalyses adenosine 5'-phosphosulfate + ATP = 3'-phosphoadenylyl sulfate + ADP + H(+). It participates in sulfur metabolism; hydrogen sulfide biosynthesis; sulfite from sulfate: step 2/3. Functionally, catalyzes the synthesis of activated sulfate. The chain is Probable adenylyl-sulfate kinase (cysC) from Pyrococcus abyssi (strain GE5 / Orsay).